A 148-amino-acid polypeptide reads, in one-letter code: 3-dehydroquinate dehydratase (148 aa).

Tyr-23 (proton acceptor) is an active-site residue. The substrate site is built by Asn-74, His-80, and Asp-87. His-100 acts as the Proton donor in catalysis. Residues 101–102 (IS) and Arg-111 contribute to the substrate site.

It belongs to the type-II 3-dehydroquinase family. As to quaternary structure, homododecamer.

It carries out the reaction 3-dehydroquinate = 3-dehydroshikimate + H2O. Its pathway is metabolic intermediate biosynthesis; chorismate biosynthesis; chorismate from D-erythrose 4-phosphate and phosphoenolpyruvate: step 3/7. Catalyzes a trans-dehydration via an enolate intermediate. This chain is 3-dehydroquinate dehydratase, found in Caldanaerobacter subterraneus subsp. tengcongensis (strain DSM 15242 / JCM 11007 / NBRC 100824 / MB4) (Thermoanaerobacter tengcongensis).